The chain runs to 372 residues: Protein Wnt-1 (372 aa).

Residues 1-29 (MLKSTQVILIFILLISIVESLSWLALGLA) form the signal peptide. 3 cysteine pairs are disulfide-bonded: cysteine 77/cysteine 88, cysteine 130/cysteine 138, and cysteine 140/cysteine 158. The N-linked (GlcNAc...) asparagine glycan is linked to asparagine 87. N-linked (GlcNAc...) asparagine glycosylation is present at asparagine 187. Disulfide bonds link cysteine 225-cysteine 239, cysteine 227-cysteine 234, cysteine 301-cysteine 332, cysteine 317-cysteine 327, cysteine 331-cysteine 371, cysteine 347-cysteine 362, cysteine 349-cysteine 359, and cysteine 354-cysteine 355. A lipid anchor (O-palmitoleoyl serine; by mom-1) is attached at serine 231.

The protein belongs to the Wnt family. Palmitoleoylation is required for efficient binding to frizzled receptors. Depalmitoleoylation leads to Wnt signaling pathway inhibition. As to expression, expressed in intestine, some head neurons and ventral nerve cord and pharyngeal neurons. Expressed in the tail and weakly expressed in the vulva and body wall muscles. Expressed highly in posterior dorsal and ventral muscle cells.

The protein resides in the secreted. It localises to the extracellular space. The protein localises to the extracellular matrix. Its subcellular location is the cytoplasm. It is found in the cell membrane. Ligand for members of the frizzled family of seven transmembrane receptors. Probable developmental protein. May be a signaling molecule which affects the development of discrete regions of tissues. Is likely to signal over only few cell diameters. Binds receptor tyrosine kinase cam-1. Together with Wnt ligand cwn-2, regulates the migration of CAN, ALM, BDU and HSN neurons during embryogenesis, the migration of QL and QR neuroblast descendants during larval development, and polarity of ALM neurons. Also acts with the Wnt ligand egl-20 to direct HSN neuron migration. Acts through the Wnt receptor cfz-2 to direct ALM migration. Also plays a role in axon growth and guidance in HSN and male CP neurons. In addition, together with Wnt ligand cwn-2, negatively regulates developmental neurite pruning of AIM neurons probably by acting as a ligand for receptor tyrosine kinase cam-1. Probably by activating the Wnt/Frizzled pathway, may regulate vulva development. May act redundantly with other Wnt ligands such as cwn-2 and mom-2 to control seam cell polarity. This is Protein Wnt-1 (cwn-1) from Caenorhabditis elegans.